The sequence spans 296 residues: Phosphoribosylaminoimidazole-succinocarboxamide synthase (296 aa).

It belongs to the SAICAR synthetase family.

The catalysed reaction is 5-amino-1-(5-phospho-D-ribosyl)imidazole-4-carboxylate + L-aspartate + ATP = (2S)-2-[5-amino-1-(5-phospho-beta-D-ribosyl)imidazole-4-carboxamido]succinate + ADP + phosphate + 2 H(+). The protein operates within purine metabolism; IMP biosynthesis via de novo pathway; 5-amino-1-(5-phospho-D-ribosyl)imidazole-4-carboxamide from 5-amino-1-(5-phospho-D-ribosyl)imidazole-4-carboxylate: step 1/2. The chain is Phosphoribosylaminoimidazole-succinocarboxamide synthase from Geobacter sulfurreducens (strain ATCC 51573 / DSM 12127 / PCA).